Reading from the N-terminus, the 1034-residue chain is Translation initiation factor IF-2 (1034 aa).

Disordered regions lie at residues 118–140 (AAEA…QSVE) and 154–446 (EAEA…NESA). Composition is skewed to low complexity over residues 162–178 (TPPV…AAAP) and 212–228 (PAVK…PAAS). Basic and acidic residues predominate over residues 304–315 (DRAREDARRAAE). The tr-type G domain maps to 535–702 (PRAPVVTVMG…NVLLQAEILE (168 aa)). Residues 544–551 (GHVDHGKT) form a G1 region. Residue 544 to 551 (GHVDHGKT) coordinates GTP. Residues 569-573 (GITQH) form a G2 region. A G3 region spans residues 590–593 (DTPG). Residues 590-594 (DTPGH) and 644-647 (NKID) each bind GTP. Residues 644–647 (NKID) are G4. The tract at residues 680–682 (SAK) is G5.

Belongs to the TRAFAC class translation factor GTPase superfamily. Classic translation factor GTPase family. IF-2 subfamily.

Its subcellular location is the cytoplasm. In terms of biological role, one of the essential components for the initiation of protein synthesis. Protects formylmethionyl-tRNA from spontaneous hydrolysis and promotes its binding to the 30S ribosomal subunits. Also involved in the hydrolysis of GTP during the formation of the 70S ribosomal complex. The sequence is that of Translation initiation factor IF-2 from Bordetella avium (strain 197N).